The chain runs to 603 residues: Spastin (603 aa).

Positions 1–34 (MNSPGGRNNKKKPVTPAAETGPGPPTPPPPPAET) are disordered. Topologically, residues 1–54 (MNSPGGRNNKKKPVTPAAETGPGPPTPPPPPAETQVLLAPPSLHKRNLYLFSYP) are cytoplasmic. Pro residues predominate over residues 22 to 32 (PGPPTPPPPPA). The segment at residues 55-75 (LLAAFSLLRFLAFQLGLLFVW) is an intramembrane region (helical). The Cytoplasmic portion of the chain corresponds to 76–603 (FCERLSRRVM…WNKEFGDTTV (528 aa)). Residues 113 to 188 (YHQQAFQYIS…LMAKDRLQLL (76 aa)) form the MIT domain. Positions 216–294 (GLLKPEKGAV…RTNKPTTPTT (79 aa)) are disordered. The segment covering 219-231 (KPEKGAVPKKKDP) has biased composition (basic and acidic residues). Residues 281–294 (KNNTRTNKPTTPTT) show a composition bias toward low complexity. Residue 369–376 (GPPGNGKT) coordinates ATP.

The protein belongs to the AAA ATPase family. Spastin subfamily. As to quaternary structure, homohexamer. The homohexamer is stabilized by ATP-binding. The homohexamer may adopt a ring conformation through which microtubules pass prior to being severed. Interacts with microtubules.

It localises to the membrane. It is found in the cytoplasm. The protein resides in the cytoskeleton. The protein localises to the microtubule organizing center. Its subcellular location is the centrosome. It localises to the perinuclear region. It is found in the nucleus. The catalysed reaction is n ATP + n H2O + a microtubule = n ADP + n phosphate + (n+1) alpha/beta tubulin heterodimers.. Its function is as follows. ATP-dependent microtubule severing protein that specifically recognizes and cuts microtubules that are polyglutamylated. Preferentially recognizes and acts on microtubules decorated with short polyglutamate tails: severing activity increases as the number of glutamates per tubulin rises from one to eight, but decreases beyond this glutamylation threshold. Microtubule severing promotes reorganization of cellular microtubule arrays and the release of microtubules from the centrosome following nucleation. Required for membrane traffic from the endoplasmic reticulum (ER) to the Golgi and for completion of the abscission stage of cytokinesis. Also plays a role in axon growth and the formation of axonal branches. This Xenopus tropicalis (Western clawed frog) protein is Spastin.